The following is a 314-amino-acid chain: Malate dehydrogenase (314 aa).

NAD(+) is bound by residues glycine 7–glycine 13 and aspartate 34. 2 residues coordinate substrate: arginine 81 and arginine 87. Residues asparagine 94 and isoleucine 117–asparagine 119 each bind NAD(+). Residues asparagine 119 and arginine 153 each coordinate substrate. The active-site Proton acceptor is the histidine 177. Methionine 230 contributes to the NAD(+) binding site.

The protein belongs to the LDH/MDH superfamily. MDH type 1 family. In terms of assembly, homodimer.

The catalysed reaction is (S)-malate + NAD(+) = oxaloacetate + NADH + H(+). Functionally, catalyzes the reversible oxidation of malate to oxaloacetate. The protein is Malate dehydrogenase of Glaesserella parasuis serovar 5 (strain SH0165) (Haemophilus parasuis).